Here is a 492-residue protein sequence, read N- to C-terminus: Histone-lysine N-methyltransferase ASHH1 (492 aa).

The 52-residue stretch at 36 to 87 (EDISICECKFDFGDPDSACGERCLNVITNTECTPGYCPCGVYCKNQKFQKCE) folds into the AWS domain. The SET domain occupies 84 to 206 (QKCEYAKTKL…PRTELAYDYN (123 aa)). The 17-residue stretch at 213-229 (AKVRCLCGAVACSGFLG) folds into the Post-SET domain. A disordered region spans residues 259–340 (SAEDELTSEP…NSQEDSSPKT (82 aa)). The span at 266-275 (SEPSKNGESN) shows a compositional bias: polar residues. Over residues 277-290 (NEEKEKDISTENHL) the composition is skewed to basic and acidic residues. The span at 291 to 306 (ESTALNIQQQSDSTPT) shows a compositional bias: polar residues. A compositionally biased stretch (basic and acidic residues) spans 317–326 (VKTETSEDMK). Residues 328–339 (LSQNSQEDSSPK) are compositionally biased toward polar residues.

It belongs to the class V-like SAM-binding methyltransferase superfamily. Histone-lysine methyltransferase family. SET2 subfamily.

Its subcellular location is the nucleus. It localises to the chromosome. It is found in the centromere. It carries out the reaction L-lysyl(4)-[histone H3] + 3 S-adenosyl-L-methionine = N(6),N(6),N(6)-trimethyl-L-lysyl(4)-[histone H3] + 3 S-adenosyl-L-homocysteine + 3 H(+). Its function is as follows. Histone methyltransferase involved in regulation of flowering time. Required for the expression of the SOC1/AGL20 gene. Required for histone H3 trimethylation on 'Lys-4' (H3K4me3) at the SOC1 locus. Prevents trimethylation on 'Lys-27' (H3K27me3) at the same locus. The polypeptide is Histone-lysine N-methyltransferase ASHH1 (ASHH1) (Arabidopsis thaliana (Mouse-ear cress)).